Reading from the N-terminus, the 566-residue chain is Oxygen-dependent choline dehydrogenase (566 aa).

FAD is bound at residue 7–36 (DYIICGAGSAGNVLATRLTEDPDVTVLLLE). Residues 180 to 202 (NGYQQEGFGPMDRTVTPKGRRAS) form a disordered region. Catalysis depends on His-474, which acts as the Proton acceptor.

The protein belongs to the GMC oxidoreductase family. The cofactor is FAD.

The catalysed reaction is choline + A = betaine aldehyde + AH2. The enzyme catalyses betaine aldehyde + NAD(+) + H2O = glycine betaine + NADH + 2 H(+). It participates in amine and polyamine biosynthesis; betaine biosynthesis via choline pathway; betaine aldehyde from choline (cytochrome c reductase route): step 1/1. Functionally, involved in the biosynthesis of the osmoprotectant glycine betaine. Catalyzes the oxidation of choline to betaine aldehyde and betaine aldehyde to glycine betaine at the same rate. The protein is Oxygen-dependent choline dehydrogenase of Burkholderia orbicola (strain MC0-3).